A 207-amino-acid polypeptide reads, in one-letter code: TM2 domain-containing protein 1 (207 aa).

Positions methionine 1–alanine 37 are cleaved as a signal peptide. Topologically, residues alanine 40–serine 128 are extracellular. Residues asparagine 72, asparagine 75, asparagine 87, and asparagine 96 are each glycosylated (N-linked (GlcNAc...) asparagine). The 49-residue stretch at glycine 118–isoleucine 166 folds into the TM2 domain. Residues leucine 129–leucine 149 form a helical membrane-spanning segment. Residues lysine 150 to threonine 153 lie on the Cytoplasmic side of the membrane. The chain crosses the membrane as a helical span at residues valine 154–glycine 174. Topologically, residues proline 175 to proline 207 are extracellular. N-linked (GlcNAc...) asparagine glycosylation occurs at asparagine 197.

Belongs to the TM2 family. Interacts with APP beta-APP42 (amyloid-beta protein 42). N-glycosylated. Widely expressed.

The protein resides in the membrane. Functionally, may participate in amyloid-beta-induced apoptosis via its interaction with beta-APP42. The protein is TM2 domain-containing protein 1 (TM2D1) of Homo sapiens (Human).